The chain runs to 260 residues: ATP synthase subunit a (260 aa).

A propeptide spans 1-11 (removed in mature form); sequence MQNTLLRTYIN. Helical transmembrane passes span 37–57, 96–116, 126–146, 152–172, 192–212, and 217–237; these read ITTF…LYVL, YFPF…ISMI, FVFI…LSLF, FFSL…LVVI, IFSG…FVQI, and LILG…EFGI.

The protein belongs to the ATPase A chain family. In terms of assembly, F-type ATPases have 2 components, CF(1) - the catalytic core - and CF(0) - the membrane proton channel. CF(1) has five subunits: alpha(3), beta(3), gamma(1), delta(1), epsilon(1). CF(0) has three main subunits: a, b and c.

It localises to the mitochondrion inner membrane. Its function is as follows. Mitochondrial membrane ATP synthase (F(1)F(0) ATP synthase or Complex V) produces ATP from ADP in the presence of a proton gradient across the membrane which is generated by electron transport complexes of the respiratory chain. F-type ATPases consist of two structural domains, F(1) - containing the extramembraneous catalytic core and F(0) - containing the membrane proton channel, linked together by a central stalk and a peripheral stalk. During catalysis, ATP synthesis in the catalytic domain of F(1) is coupled via a rotary mechanism of the central stalk subunits to proton translocation. Key component of the proton channel; it may play a direct role in the translocation of protons across the membrane. The polypeptide is ATP synthase subunit a (ATP6) (Candida glabrata (strain ATCC 2001 / BCRC 20586 / JCM 3761 / NBRC 0622 / NRRL Y-65 / CBS 138) (Yeast)).